We begin with the raw amino-acid sequence, 330 residues long: MRIRYGWELALAALLVIEIVSFGAINPRMLDLNMLLFSTSDFICIGIVALPLTMVIVSGGIDISFGSTIGLCAIALGVLFQSGVPMPLAILLTLLLGALCGLINAGLIIYTKVNPLVITLGTLYLFAGSALLLSGMAGATGYEGIGGFPMAFTDFANLDVLGLPVPLIIFLICLLVFWLWLHKTHAGRNVFLIGQSPRVALYSAIPVNRTLCALYAMTGLASAVAAVLLVSYFGSARSDLGASFLMPAITAVVLGGANIYGGSGAIIGTAIAVLLVGYLQQGLQMAGVPNQVSSALSGALLIVVVVGRSVSLHRQQIKEWLARRANNPLP.

The Cytoplasmic portion of the chain corresponds to 1–4; it reads MRIR. A helical transmembrane segment spans residues 5 to 25; it reads YGWELALAALLVIEIVSFGAI. The Periplasmic segment spans residues 26-42; the sequence is NPRMLDLNMLLFSTSDF. A helical transmembrane segment spans residues 43–63; that stretch reads ICIGIVALPLTMVIVSGGIDI. The Cytoplasmic portion of the chain corresponds to 64 to 67; sequence SFGS. 2 helical membrane-spanning segments follow: residues 68 to 88 and 89 to 109; these read TIGL…PMPL and AILL…GLII. At 110–115 the chain is on the cytoplasmic side; it reads YTKVNP. Residues 116 to 136 form a helical membrane-spanning segment; it reads LVITLGTLYLFAGSALLLSGM. Topologically, residues 137–159 are periplasmic; sequence AGATGYEGIGGFPMAFTDFANLD. A helical transmembrane segment spans residues 160-180; the sequence is VLGLPVPLIIFLICLLVFWLW. Over 181–209 the chain is Cytoplasmic; sequence LHKTHAGRNVFLIGQSPRVALYSAIPVNR. Residues 210 to 230 traverse the membrane as a helical segment; sequence TLCALYAMTGLASAVAAVLLV. Residues 231–237 lie on the Periplasmic side of the membrane; sequence SYFGSAR. 2 consecutive transmembrane segments (helical) span residues 238 to 258 and 259 to 279; these read SDLG…GGAN and IYGG…VGYL. Residues 280-285 lie on the Periplasmic side of the membrane; it reads QQGLQM. The helical transmembrane segment at 286–306 threads the bilayer; it reads AGVPNQVSSALSGALLIVVVV. The Cytoplasmic portion of the chain corresponds to 307–330; that stretch reads GRSVSLHRQQIKEWLARRANNPLP.

The protein belongs to the binding-protein-dependent transport system permease family. AraH/RbsC subfamily. In terms of assembly, the complex is composed of two ATP-binding proteins (LsrA), two transmembrane proteins (LsrC and LsrD) and a solute-binding protein (LsrB).

It is found in the cell inner membrane. Its function is as follows. Part of the ABC transporter complex LsrABCD involved in autoinducer 2 (AI-2) import. Probably responsible for the translocation of the substrate across the membrane. This chain is Autoinducer 2 import system permease protein LsrD (lsrD), found in Escherichia coli O157:H7.